The primary structure comprises 195 residues: Small ribosomal subunit protein uS4 (195 aa).

One can recognise an S4 RNA-binding domain in the interval 92–152 (SRLDNIVYRL…EKHKHKANKN (61 aa)).

The protein belongs to the universal ribosomal protein uS4 family. In terms of assembly, part of the 30S ribosomal subunit. Contacts protein S5. The interaction surface between S4 and S5 is involved in control of translational fidelity.

In terms of biological role, one of the primary rRNA binding proteins, it binds directly to 16S rRNA where it nucleates assembly of the body of the 30S subunit. Its function is as follows. With S5 and S12 plays an important role in translational accuracy. The chain is Small ribosomal subunit protein uS4 from Karelsulcia muelleri (strain GWSS) (Sulcia muelleri).